The chain runs to 72 residues: DNA-directed RNA polymerase subunit omega (72 aa).

It belongs to the RNA polymerase subunit omega family. The RNAP catalytic core consists of 2 alpha, 1 beta, 1 beta' and 1 omega subunit. When a sigma factor is associated with the core the holoenzyme is formed, which can initiate transcription.

It carries out the reaction RNA(n) + a ribonucleoside 5'-triphosphate = RNA(n+1) + diphosphate. Its function is as follows. Promotes RNA polymerase assembly. Latches the N- and C-terminal regions of the beta' subunit thereby facilitating its interaction with the beta and alpha subunits. The chain is DNA-directed RNA polymerase subunit omega from Lactobacillus johnsonii (strain CNCM I-12250 / La1 / NCC 533).